Reading from the N-terminus, the 1026-residue chain is Multidrug resistance protein MdtC (1026 aa).

11 helical membrane passes run 15 to 35 (ILIAAAITLCGILGFRLLPVA), 333 to 353 (EVEETLAISVALVIMVVFLFL), 360 to 380 (LIPAVAVPVSLIGTFAAMYLC), 387 to 407 (LSLMALTIATGFVVDDAIVVL), 431 to 451 (VGFTVISMSLSLVAVFLPLLL), 463 to 483 (FAVTLSVAIGISLVVSLTLTP), 528 to 548 (LVGVVFLGTVALNIWLYIAIP), 853 to 873 (LILIVAAIATVYIVLGILYES), 897 to 917 (LFNAPFSLIALIGIMLLIGIV), 953 to 973 (PIMMTTLAALFGALPLVLSGG), and 984 to 1004 (ITIVGGLVMSQLLTLYTTPVV).

It belongs to the resistance-nodulation-cell division (RND) (TC 2.A.6) family. MdtC subfamily. Part of a tripartite efflux system composed of MdtA, MdtB and MdtC. MdtC forms a heteromultimer with MdtB.

The protein resides in the cell inner membrane. The protein is Multidrug resistance protein MdtC of Salmonella paratyphi C (strain RKS4594).